The chain runs to 62 residues: Large ribosomal subunit protein uL30 (62 aa).

It belongs to the universal ribosomal protein uL30 family. Part of the 50S ribosomal subunit.

The sequence is that of Large ribosomal subunit protein uL30 from Dinoroseobacter shibae (strain DSM 16493 / NCIMB 14021 / DFL 12).